The primary structure comprises 493 residues: Anthranilate synthase component 1 (493 aa).

L-tryptophan contacts are provided by residues Ser-48 and 273–275 (PYM). A chorismate-binding site is contributed by 308 to 309 (GT). Glu-335 is a binding site for Mg(2+). Chorismate contacts are provided by residues Tyr-423, Arg-443, 457 to 459 (GGG), and Gly-459. Glu-472 contacts Mg(2+).

This sequence belongs to the anthranilate synthase component I family. In terms of assembly, heterotetramer consisting of two non-identical subunits: a beta subunit (TrpG) and a large alpha subunit (TrpE). It depends on Mg(2+) as a cofactor.

It catalyses the reaction chorismate + L-glutamine = anthranilate + pyruvate + L-glutamate + H(+). Its pathway is amino-acid biosynthesis; L-tryptophan biosynthesis; L-tryptophan from chorismate: step 1/5. Its activity is regulated as follows. Feedback inhibited by tryptophan. Part of a heterotetrameric complex that catalyzes the two-step biosynthesis of anthranilate, an intermediate in the biosynthesis of L-tryptophan. In the first step, the glutamine-binding beta subunit (TrpG) of anthranilate synthase (AS) provides the glutamine amidotransferase activity which generates ammonia as a substrate that, along with chorismate, is used in the second step, catalyzed by the large alpha subunit of AS (TrpE) to produce anthranilate. In the absence of TrpG, TrpE can synthesize anthranilate directly from chorismate and high concentrations of ammonia. The protein is Anthranilate synthase component 1 (trpE) of Pseudomonas putida (Arthrobacter siderocapsulatus).